We begin with the raw amino-acid sequence, 583 residues long: CTP synthase (583 aa).

The segment at 1–278 (MRRHPQTATK…DAFVVRRLNL (278 aa)) is amidoligase domain. A CTP-binding site is contributed by S20. UTP is bound at residue S20. ATP is bound by residues 21–26 (SLGKGL) and D78. The Mg(2+) site is built by D78 and E152. CTP is bound by residues 159-161 (DIE), 199-204 (KTKPTQ), and K235. Residues 199-204 (KTKPTQ) and K235 each bind UTP. The Glutamine amidotransferase type-1 domain occupies 303 to 551 (RIALVGKYVE…VKAAIDYKEG (249 aa)). G366 serves as a coordination point for L-glutamine. C393 acts as the Nucleophile; for glutamine hydrolysis in catalysis. L-glutamine contacts are provided by residues 394-397 (LGLQ), E416, and R477. Residues H524 and E526 contribute to the active site. The interval 559-583 (PERVSNGAERRDQVGQSIPEPANRG) is disordered.

The protein belongs to the CTP synthase family. Homotetramer.

It catalyses the reaction UTP + L-glutamine + ATP + H2O = CTP + L-glutamate + ADP + phosphate + 2 H(+). The enzyme catalyses L-glutamine + H2O = L-glutamate + NH4(+). It carries out the reaction UTP + NH4(+) + ATP = CTP + ADP + phosphate + 2 H(+). The protein operates within pyrimidine metabolism; CTP biosynthesis via de novo pathway; CTP from UDP: step 2/2. Allosterically activated by GTP, when glutamine is the substrate; GTP has no effect on the reaction when ammonia is the substrate. The allosteric effector GTP functions by stabilizing the protein conformation that binds the tetrahedral intermediate(s) formed during glutamine hydrolysis. Inhibited by the product CTP, via allosteric rather than competitive inhibition. Its function is as follows. Catalyzes the ATP-dependent amination of UTP to CTP with either L-glutamine or ammonia as the source of nitrogen. Regulates intracellular CTP levels through interactions with the four ribonucleotide triphosphates. The chain is CTP synthase from Mycobacterium marinum (strain ATCC BAA-535 / M).